A 393-amino-acid polypeptide reads, in one-letter code: Acetylornithine aminotransferase (393 aa).

Residues 105-106 (GA) and Phe-138 contribute to the pyridoxal 5'-phosphate site. Arg-141 serves as a coordination point for N(2)-acetyl-L-ornithine. Residue 224 to 227 (DEVQ) coordinates pyridoxal 5'-phosphate. Lys-253 is subject to N6-(pyridoxal phosphate)lysine. Ser-281 contacts N(2)-acetyl-L-ornithine. Residue Thr-282 participates in pyridoxal 5'-phosphate binding.

Belongs to the class-III pyridoxal-phosphate-dependent aminotransferase family. ArgD subfamily. Homodimer. Pyridoxal 5'-phosphate is required as a cofactor.

Its subcellular location is the cytoplasm. It catalyses the reaction N(2)-acetyl-L-ornithine + 2-oxoglutarate = N-acetyl-L-glutamate 5-semialdehyde + L-glutamate. The protein operates within amino-acid biosynthesis; L-arginine biosynthesis; N(2)-acetyl-L-ornithine from L-glutamate: step 4/4. This chain is Acetylornithine aminotransferase, found in Haemophilus ducreyi (strain 35000HP / ATCC 700724).